A 178-amino-acid chain; its full sequence is Protein GrpE (178 aa).

The protein belongs to the GrpE family. As to quaternary structure, homodimer.

The protein localises to the cytoplasm. Its function is as follows. Participates actively in the response to hyperosmotic and heat shock by preventing the aggregation of stress-denatured proteins, in association with DnaK and GrpE. It is the nucleotide exchange factor for DnaK and may function as a thermosensor. Unfolded proteins bind initially to DnaJ; upon interaction with the DnaJ-bound protein, DnaK hydrolyzes its bound ATP, resulting in the formation of a stable complex. GrpE releases ADP from DnaK; ATP binding to DnaK triggers the release of the substrate protein, thus completing the reaction cycle. Several rounds of ATP-dependent interactions between DnaJ, DnaK and GrpE are required for fully efficient folding. The chain is Protein GrpE from Rickettsia africae (strain ESF-5).